We begin with the raw amino-acid sequence, 274 residues long: MSFSGHTARKRFGQHWLRDARVLDQIVEAARLQQDDCVLEVGPGRGALTERLLASPAAQIHAIELDRDLVRGLHDRFGSESRFSLREGDVLEAPLHLVDGGFANKVVANIPYNITGPLLARLIGRLDRPVEPTYDCLVLLLQKEVAERIRAKPGRSSFSALSVRMQLLADCSLVCPVPPRCFQPPPKVQSEVILLKPFPPERRLPIDLASRVEALLKQAFQARRKMLRNTLAGVIDPQVLEPLAASVGISLQQRPQEVAAEAWVALARGLNQDV.

S-adenosyl-L-methionine-binding residues include His15, Leu17, Gly42, Glu64, Asp89, and Asn109.

Belongs to the class I-like SAM-binding methyltransferase superfamily. rRNA adenine N(6)-methyltransferase family. RsmA subfamily.

It localises to the cytoplasm. It carries out the reaction adenosine(1518)/adenosine(1519) in 16S rRNA + 4 S-adenosyl-L-methionine = N(6)-dimethyladenosine(1518)/N(6)-dimethyladenosine(1519) in 16S rRNA + 4 S-adenosyl-L-homocysteine + 4 H(+). In terms of biological role, specifically dimethylates two adjacent adenosines (A1518 and A1519) in the loop of a conserved hairpin near the 3'-end of 16S rRNA in the 30S particle. May play a critical role in biogenesis of 30S subunits. In Synechococcus sp. (strain CC9902), this protein is Ribosomal RNA small subunit methyltransferase A.